The following is a 164-amino-acid chain: B-phycoerythrin alpha chain (164 aa).

Positions 82 and 139 each coordinate (2R,3E)-phycoerythrobilin.

The protein belongs to the phycobiliprotein family. As to quaternary structure, heteromer of 6 alpha, 6 beta and one gamma chain. Contains two covalently linked bilin chromophores.

It localises to the plastid. The protein localises to the chloroplast thylakoid membrane. In terms of biological role, light-harvesting photosynthetic bile pigment-protein from the phycobiliprotein complex. The sequence is that of B-phycoerythrin alpha chain (cpeA) from Rhodella violacea (Red alga).